Reading from the N-terminus, the 113-residue chain is Large ribosomal subunit protein uL22 (113 aa).

Belongs to the universal ribosomal protein uL22 family. In terms of assembly, part of the 50S ribosomal subunit.

Functionally, this protein binds specifically to 23S rRNA; its binding is stimulated by other ribosomal proteins, e.g. L4, L17, and L20. It is important during the early stages of 50S assembly. It makes multiple contacts with different domains of the 23S rRNA in the assembled 50S subunit and ribosome. Its function is as follows. The globular domain of the protein is located near the polypeptide exit tunnel on the outside of the subunit, while an extended beta-hairpin is found that lines the wall of the exit tunnel in the center of the 70S ribosome. This Herpetosiphon aurantiacus (strain ATCC 23779 / DSM 785 / 114-95) protein is Large ribosomal subunit protein uL22.